Consider the following 314-residue polypeptide: tRNA uridine(34) hydroxylase (314 aa).

The Rhodanese domain maps to 140–234 (ARDDVILIDT…YLEETPPDES (95 aa)). Cys-194 serves as the catalytic Cysteine persulfide intermediate.

Belongs to the TrhO family.

It catalyses the reaction uridine(34) in tRNA + AH2 + O2 = 5-hydroxyuridine(34) in tRNA + A + H2O. Catalyzes oxygen-dependent 5-hydroxyuridine (ho5U) modification at position 34 in tRNAs. The chain is tRNA uridine(34) hydroxylase from Acinetobacter baumannii (strain SDF).